The following is a 317-amino-acid chain: Acetyl-coenzyme A carboxylase carboxyl transferase subunit alpha (317 aa).

One can recognise a CoA carboxyltransferase C-terminal domain in the interval 40–293 (LEKRSADALK…GDIIAASLRS (254 aa)).

The protein belongs to the AccA family. As to quaternary structure, acetyl-CoA carboxylase is a heterohexamer composed of biotin carboxyl carrier protein (AccB), biotin carboxylase (AccC) and two subunits each of ACCase subunit alpha (AccA) and ACCase subunit beta (AccD).

It localises to the cytoplasm. It catalyses the reaction N(6)-carboxybiotinyl-L-lysyl-[protein] + acetyl-CoA = N(6)-biotinyl-L-lysyl-[protein] + malonyl-CoA. The protein operates within lipid metabolism; malonyl-CoA biosynthesis; malonyl-CoA from acetyl-CoA: step 1/1. Functionally, component of the acetyl coenzyme A carboxylase (ACC) complex. First, biotin carboxylase catalyzes the carboxylation of biotin on its carrier protein (BCCP) and then the CO(2) group is transferred by the carboxyltransferase to acetyl-CoA to form malonyl-CoA. The polypeptide is Acetyl-coenzyme A carboxylase carboxyl transferase subunit alpha (Brucella melitensis biotype 2 (strain ATCC 23457)).